The sequence spans 498 residues: ATP synthase subunit beta, chloroplastic (498 aa).

An ATP-binding site is contributed by 172–179 (GGAGVGKT).

It belongs to the ATPase alpha/beta chains family. In terms of assembly, F-type ATPases have 2 components, CF(1) - the catalytic core - and CF(0) - the membrane proton channel. CF(1) has five subunits: alpha(3), beta(3), gamma(1), delta(1), epsilon(1). CF(0) has four main subunits: a(1), b(1), b'(1) and c(9-12).

The protein resides in the plastid. It is found in the chloroplast thylakoid membrane. It catalyses the reaction ATP + H2O + 4 H(+)(in) = ADP + phosphate + 5 H(+)(out). Functionally, produces ATP from ADP in the presence of a proton gradient across the membrane. The catalytic sites are hosted primarily by the beta subunits. The protein is ATP synthase subunit beta, chloroplastic of Citrus sinensis (Sweet orange).